A 725-amino-acid polypeptide reads, in one-letter code: Palmitoyltransferase AKR1 (725 aa).

The Cytoplasmic portion of the chain corresponds to 1–303 (MGTIAMASIN…LKDKRSFVTR (303 aa)). 5 ANK repeats span residues 84–113 (EGIT…EINR), 118–147 (SIAT…DPLV), 151–180 (QGYN…PVDV), 184–213 (FGHT…SVHA), and 217–246 (QGFT…DRFA). A helical transmembrane segment spans residues 304 to 324 (FLFFWPFVLVWAMLVAMSSAP). Residues 325–326 (VY) lie on the Lumenal side of the membrane. Residues 327-347 (IGVPLGIAAVYAIQWVAQQVL) traverse the membrane as a helical segment. Residues 348–364 (EYAPSDMRHFHKTPWLT) are Cytoplasmic-facing. A helical membrane pass occupies residues 365–385 (GIFAATLFWTGVNWLTTVLFA). Over 386-397 (TTLGAPEGKGHG) the chain is Lumenal. Residues 398–418 (ILNFLFALFFGFTVYFYIASM) traverse the membrane as a helical segment. The Cytoplasmic segment spans residues 419-495 (RYDPGFVPKM…NCVGINNHRH (77 aa)). Positions 451-501 (NFCVTCMIQTPLRSKHCRRCQRCVAKHDHHCPWVYNCVGINNHRHFFFYLI) constitute a DHHC domain. C481 (S-palmitoyl cysteine intermediate) is an active-site residue. The helical transmembrane segment at 496–516 (FFFYLISLTMGIVSYDFLLYY) threads the bilayer. Topologically, residues 517–547 (YFDTVSKNASETCNVLSPTLCKYINADSYTS) are lumenal. Residues 548-568 (ILAIWITMQLLWVTMLLFTQF) form a helical membrane-spanning segment. Residues 569–725 (IQVARAMTTY…YEAVGTEDVV (157 aa)) lie on the Cytoplasmic side of the membrane.

Belongs to the DHHC palmitoyltransferase family. AKR/ZDHHC17 subfamily.

It is found in the early endosome membrane. The protein localises to the golgi apparatus membrane. It catalyses the reaction L-cysteinyl-[protein] + hexadecanoyl-CoA = S-hexadecanoyl-L-cysteinyl-[protein] + CoA. In terms of biological role, palmitoyltransferase specific for casein kinase 1. This chain is Palmitoyltransferase AKR1 (AKR1), found in Gibberella zeae (strain ATCC MYA-4620 / CBS 123657 / FGSC 9075 / NRRL 31084 / PH-1) (Wheat head blight fungus).